The chain runs to 127 residues: Holo-[acyl-carrier-protein] synthase (127 aa).

Residues aspartate 9 and glutamate 58 each contribute to the Mg(2+) site.

This sequence belongs to the P-Pant transferase superfamily. AcpS family. It depends on Mg(2+) as a cofactor.

It is found in the cytoplasm. The enzyme catalyses apo-[ACP] + CoA = holo-[ACP] + adenosine 3',5'-bisphosphate + H(+). In terms of biological role, transfers the 4'-phosphopantetheine moiety from coenzyme A to a Ser of acyl-carrier-protein. This chain is Holo-[acyl-carrier-protein] synthase, found in Shewanella putrefaciens (strain CN-32 / ATCC BAA-453).